The sequence spans 242 residues: Uridylate kinase (242 aa).

Residue 12-15 coordinates ATP; sequence KLSG. The segment at 20 to 25 is involved in allosteric activation by GTP; it reads GNDGFG. A UMP-binding site is contributed by G54. 2 residues coordinate ATP: G55 and R59. UMP contacts are provided by residues D74 and 135–142; that span reads TGNPYFST. 3 residues coordinate ATP: N163, Y169, and D172.

This sequence belongs to the UMP kinase family. Homohexamer.

It is found in the cytoplasm. It catalyses the reaction UMP + ATP = UDP + ADP. Its pathway is pyrimidine metabolism; CTP biosynthesis via de novo pathway; UDP from UMP (UMPK route): step 1/1. Allosterically activated by GTP. Inhibited by UTP. In terms of biological role, catalyzes the reversible phosphorylation of UMP to UDP. This is Uridylate kinase from Listeria innocua serovar 6a (strain ATCC BAA-680 / CLIP 11262).